Here is a 172-residue protein sequence, read N- to C-terminus: Interferon tau-2 (172 aa).

2 disulfide bridges follow: Cys-1–Cys-99 and Cys-29–Cys-139. Asn-78 carries N-linked (GlcNAc...) asparagine glycosylation.

The protein belongs to the alpha/beta interferon family. IFN-alphaII subfamily. In terms of tissue distribution, constitutively and exclusively expressed in the mononuclear cells of the extraembryonic trophectoderm.

It is found in the secreted. Its function is as follows. Paracrine hormone primarily responsible for maternal recognition of pregnancy. Interacts with endometrial receptors, probably type I interferon receptors, and blocks estrogen receptor expression, preventing the estrogen-induced increase in oxytocin receptor expression in the endometrium. This results in the suppression of the pulsatile endometrial release of the luteolytic hormone prostaglandin F2-alpha, hindering the regression of the corpus luteum (luteolysis) and therefore a return to ovarian cyclicity. This, and a possible direct effect of IFN-tau on prostaglandin synthesis, leads in turn to continued ovarian progesterone secretion, which stimulates the secretion by the endometrium of the nutrients required for the growth of the conceptus. In summary, displays particularly high antiviral and antiproliferative potency concurrently with particular weak cytotoxicity, high antiluteolytic activity and immunomodulatory properties. In contrast with other IFNs, IFN-tau is not virally inducible. The chain is Interferon tau-2 (IFNT2) from Bos taurus (Bovine).